Here is a 458-residue protein sequence, read N- to C-terminus: tRNA modification GTPase MnmE (458 aa).

R22, E84, and R123 together coordinate (6S)-5-formyl-5,6,7,8-tetrahydrofolate. One can recognise a TrmE-type G domain in the interval 220–379 (GISTAIIGRP…LEKAIADLFF (160 aa)). A K(+)-binding site is contributed by N230. GTP contacts are provided by residues 230–235 (NVGKSS), 249–255 (TDIAGTT), and 274–277 (DTAG). Mg(2+) is bound at residue S234. 3 residues coordinate K(+): T249, I251, and T254. A Mg(2+)-binding site is contributed by T255. K458 is a binding site for (6S)-5-formyl-5,6,7,8-tetrahydrofolate.

Belongs to the TRAFAC class TrmE-Era-EngA-EngB-Septin-like GTPase superfamily. TrmE GTPase family. Homodimer. Heterotetramer of two MnmE and two MnmG subunits. Requires K(+) as cofactor.

It localises to the cytoplasm. Functionally, exhibits a very high intrinsic GTPase hydrolysis rate. Involved in the addition of a carboxymethylaminomethyl (cmnm) group at the wobble position (U34) of certain tRNAs, forming tRNA-cmnm(5)s(2)U34. This chain is tRNA modification GTPase MnmE, found in Bacillus mycoides (strain KBAB4) (Bacillus weihenstephanensis).